The chain runs to 1407 residues: Metabotropic glutamate receptor-like protein P (1407 aa).

Topologically, residues 1–696 (MKFKKKNIYW…KTIKVTSFVK (696 aa)) are extracellular. N-linked (GlcNAc...) asparagine glycosylation is found at Asn-43 and Asn-58. PbH1 repeat units lie at residues 93-118 (ISDIHFKDLTIKNGFGNAISGIFDGG) and 129-150 (FVNVALIDNTCSASGGGIFLYN). 16 N-linked (GlcNAc...) asparagine glycosylation sites follow: Asn-162, Asn-179, Asn-182, Asn-230, Asn-241, Asn-270, Asn-368, Asn-391, Asn-464, Asn-512, Asn-539, Asn-544, Asn-554, Asn-571, Asn-627, and Asn-646. Residues 254 to 279 (ISNVIFESCEFIGNRANSTGGLSFLT) form a PbH1 3 repeat. The stretch at 452–476 (GYSVYIENCEVKNNTGLFKGCFIDT) is one PbH1 4 repeat. A helical transmembrane segment spans residues 697–717 (FLVGTLAAILLIILIISGFIS). The Cytoplasmic segment spans residues 718 to 731 (LKYRKKRVIRYSNP). A helical transmembrane segment spans residues 732-752 (LFLCIILVGCIIFLITIPVLF). At 753 to 758 (GSTSAT) the chain is on the extracellular side. A helical membrane pass occupies residues 759–779 (CKIRFPIIVIGSCLVTSSVFI). Topologically, residues 780-806 (KQFRIWRLIKDIQLLRETNVENKYLLK) are cytoplasmic. The helical transmembrane segment at 807–827 (FISILMVIPIIIVICSFFIFP) threads the bilayer. The Extracellular portion of the chain corresponds to 828 to 853 (THEKYTFNQRDITITHYCSDGSYLAY). Residues 854-874 (VIIFLVYQMAILLFGCYLVIV) traverse the membrane as a helical segment. Topologically, residues 875–890 (CRKFRSIPGTFNEATY) are cytoplasmic. The chain crosses the membrane as a helical span at residues 891-911 (IGILIYNYTVVLIVAIPLAYV). Residues 912–919 (FNKNPLAN) lie on the Extracellular side of the membrane. A helical membrane pass occupies residues 920–940 (FLIFSISIIVFVLSTIILLFI). Over 941–1407 (PKFHFLLRKK…LSPINLSKRK (467 aa)) the chain is Cytoplasmic. The span at 991–1004 (QQRQGNLYNNNSLG) shows a compositional bias: polar residues. 4 disordered regions span residues 991-1072 (QQRQ…DPNF), 1084-1248 (GKRK…SSIG), 1267-1351 (KKVK…NFNE), and 1369-1407 (FHQKKQKDSDNRKNYNISPINISDEKVPPLSPINLSKRK). A compositionally biased stretch (low complexity) spans 1005–1029 (RSISSNTRKRSNNNINNNNNNNSFN). The span at 1030-1040 (MTGFSDSSSTI) shows a compositional bias: polar residues. The segment covering 1041-1071 (SNPNLTSFTSSPSSLNSSSDSDSTPDFNDPN) has biased composition (low complexity). A compositionally biased stretch (basic and acidic residues) spans 1084–1093 (GKRKSIEKNK). Composition is skewed to low complexity over residues 1099-1147 (PNSP…NTPI), 1154-1246 (SSKT…SDSS), and 1276-1339 (SDST…NNNN). Residues 1315–1344 (NNNNNNNNNNNNNINNNNNNANNNNSDTDD) are a coiled coil.

The protein belongs to the G-protein coupled receptor 3 family. GABA-B receptor subfamily.

Its subcellular location is the membrane. This is Metabotropic glutamate receptor-like protein P (grlP) from Dictyostelium discoideum (Social amoeba).